Here is a 257-residue protein sequence, read N- to C-terminus: GTP cyclohydrolase FolE2 (257 aa).

It belongs to the GTP cyclohydrolase IV family.

The enzyme catalyses GTP + H2O = 7,8-dihydroneopterin 3'-triphosphate + formate + H(+). It functions in the pathway cofactor biosynthesis; 7,8-dihydroneopterin triphosphate biosynthesis; 7,8-dihydroneopterin triphosphate from GTP: step 1/1. In terms of biological role, converts GTP to 7,8-dihydroneopterin triphosphate. In Dictyoglomus turgidum (strain DSM 6724 / Z-1310), this protein is GTP cyclohydrolase FolE2.